Reading from the N-terminus, the 113-residue chain is MRRCAWAVRALSHMDSSMCSSAPDPEMWIIQGTLAWRTSPVRTGFETKPLLRRIDGAIQVRSNVDPTFYSLVGSGRSGGDPHGSSLLENPYIPYQCMDSYLSSTGLGSASMGK.

It belongs to the ycf68 family.

The protein resides in the plastid. It localises to the chloroplast. This is an uncharacterized protein from Eucalyptus globulus subsp. globulus (Tasmanian blue gum).